Consider the following 163-residue polypeptide: Nucleotide-binding protein YPDSF_2805 (163 aa).

Belongs to the YajQ family.

Functionally, nucleotide-binding protein. The protein is Nucleotide-binding protein YPDSF_2805 of Yersinia pestis (strain Pestoides F).